Here is a 73-residue protein sequence, read N- to C-terminus: Frenatin 3.1 (73 aa).

The first 22 residues, 1-22 (MHFLKKSIFLVLFLGLVSLSIC), serve as a signal peptide directing secretion. A propeptide spanning residues 23–46 (EKEKREDQNEEEVDENEEASEEKR) is cleaved from the precursor. Residues 25–45 (EKREDQNEEEVDENEEASEEK) form a disordered region. Residues 30 to 42 (QNEEEVDENEEAS) are compositionally biased toward acidic residues.

In terms of tissue distribution, expressed by the skin glands.

The protein localises to the secreted. Its function is as follows. Antimicrobial peptide with activity against both Gram-positive and Gram-negative bacteria. This Nyctimystes infrafrenatus (White-lipped tree frog) protein is Frenatin 3.1.